A 150-amino-acid polypeptide reads, in one-letter code: C-type lectin 16 (150 aa).

Residues 1–27 (MKRVRVKVIFVSFGLLVVFLSLSGTAA) form the signal peptide. 3 disulfides stabilise this stretch: Cys-29-Cys-40, Cys-57-Cys-146, and Cys-123-Cys-138. The C-type lectin domain maps to 36-147 (YEGHCYKPFN…CRMLARFVCE (112 aa)).

The protein belongs to the snaclec family. Heteromultimer; disulfide-linked. In terms of tissue distribution, expressed by the venom gland.

It localises to the secreted. Functionally, interferes with one step of hemostasis (modulation of platelet aggregation, or coagulation cascade, for example). In Crotalus adamanteus (Eastern diamondback rattlesnake), this protein is C-type lectin 16.